A 355-amino-acid polypeptide reads, in one-letter code: Cyanide hydratase (355 aa).

A CN hydrolase domain is found at Tyr6–Leu285. The Proton acceptor role is filled by Glu46. Lys128 is a catalytic residue. Cys163 serves as the catalytic Nucleophile.

This sequence belongs to the carbon-nitrogen hydrolase superfamily. Nitrilase family. In terms of assembly, oligomer of dimers, forming left-handed helical fibers.

The catalysed reaction is formamide = hydrogen cyanide + H2O. Catalyzes the hydration of cyanide to formamide. Degradation of cyanide may be important for plant pathogenic fungi in infection of cyanogenic plants. This chain is Cyanide hydratase, found in Gibberella zeae (strain ATCC MYA-4620 / CBS 123657 / FGSC 9075 / NRRL 31084 / PH-1) (Wheat head blight fungus).